Consider the following 67-residue polypeptide: Large ribosomal subunit protein bL35 (67 aa).

The protein belongs to the bacterial ribosomal protein bL35 family.

The polypeptide is Large ribosomal subunit protein bL35 (Bartonella quintana (strain Toulouse) (Rochalimaea quintana)).